We begin with the raw amino-acid sequence, 139 residues long: Insulin-like growth factor (139 aa).

A signal peptide spans 1-38 (YIRRVRQGSIYSLLVESQQWCKLTLTLLLLLALLTRCT). Residues 39–67 (LSETLCGSELVDTLQFVCDDRGFFFVPQH) form a b region. The tract at residues 68-82 (VPPRRGAHRRSRARK) is c. An a region spans residues 83 to 103 (GIVEECCFKGCSLRLLEMYCA). The interval 104 to 113 (RPSKAERDVA) is d. The segment at 108 to 139 (AERDVARPRQRPHRASQHSRRGSQSRGRGRSR) is disordered. Residues 114–139 (RPRQRPHRASQHSRRGSQSRGRGRSR) form an e region. The segment covering 115–139 (PRQRPHRASQHSRRGSQSRGRGRSR) has biased composition (basic residues).

Belongs to the insulin family.

It is found in the secreted. The insulin-like growth factors, isolated from plasma, are structurally and functionally related to insulin but have a much higher growth-promoting activity. The sequence is that of Insulin-like growth factor from Myxine glutinosa (Atlantic hagfish).